Reading from the N-terminus, the 670-residue chain is DNA ligase (670 aa).

Residues 33–37 (DAEYD), 82–83 (SL), and glutamate 114 each bind NAD(+). Catalysis depends on lysine 116, which acts as the N6-AMP-lysine intermediate. Residues arginine 137, glutamate 173, lysine 291, and lysine 315 each contribute to the NAD(+) site. The Zn(2+) site is built by cysteine 409, cysteine 412, cysteine 427, and cysteine 433. One can recognise a BRCT domain in the interval 592–670 (VQSDRLSGNT…ENALAELLSD (79 aa)).

Belongs to the NAD-dependent DNA ligase family. LigA subfamily. Mg(2+) serves as cofactor. The cofactor is Mn(2+).

It catalyses the reaction NAD(+) + (deoxyribonucleotide)n-3'-hydroxyl + 5'-phospho-(deoxyribonucleotide)m = (deoxyribonucleotide)n+m + AMP + beta-nicotinamide D-nucleotide.. DNA ligase that catalyzes the formation of phosphodiester linkages between 5'-phosphoryl and 3'-hydroxyl groups in double-stranded DNA using NAD as a coenzyme and as the energy source for the reaction. It is essential for DNA replication and repair of damaged DNA. The sequence is that of DNA ligase from Idiomarina loihiensis (strain ATCC BAA-735 / DSM 15497 / L2-TR).